The following is a 286-amino-acid chain: Bifunctional protein FolD (286 aa).

NADP(+)-binding positions include 164-166 (GTS) and Ile-230.

The protein belongs to the tetrahydrofolate dehydrogenase/cyclohydrolase family. In terms of assembly, homodimer.

The catalysed reaction is (6R)-5,10-methylene-5,6,7,8-tetrahydrofolate + NADP(+) = (6R)-5,10-methenyltetrahydrofolate + NADPH. The enzyme catalyses (6R)-5,10-methenyltetrahydrofolate + H2O = (6R)-10-formyltetrahydrofolate + H(+). The protein operates within one-carbon metabolism; tetrahydrofolate interconversion. Functionally, catalyzes the oxidation of 5,10-methylenetetrahydrofolate to 5,10-methenyltetrahydrofolate and then the hydrolysis of 5,10-methenyltetrahydrofolate to 10-formyltetrahydrofolate. This chain is Bifunctional protein FolD, found in Mesoplasma florum (strain ATCC 33453 / NBRC 100688 / NCTC 11704 / L1) (Acholeplasma florum).